The sequence spans 431 residues: uncharacterized protein (431 aa).

Transmembrane regions (helical) follow at residues 228-248 (GLLS…HYLS), 279-299 (IGLP…NFTF), 349-369 (ILWP…FLWI), and 388-408 (MIFN…LKLY).

The protein resides in the membrane. This is an uncharacterized protein from Saccharomyces cerevisiae (strain ATCC 204508 / S288c) (Baker's yeast).